Here is a 477-residue protein sequence, read N- to C-terminus: Histidine permease HisP (477 aa).

A run of 12 helical transmembrane segments spans residues 16-36, 40-60, 86-106, 126-146, 156-176, 192-212, 238-258, 284-304, 337-359, 364-386, 408-428, and 437-457; these read ITMI…SGAT, AGPW…YFVM, PAFG…TIAV, IFSG…VGAF, IKVI…FGVL, HGFV…GFSF, SIFW…AAII, IGFA…VISS, IPFY…GIFG, LFLI…VSHI, WFPF…INLD, and WGEG…YFGY.

The protein belongs to the amino acid-polyamine-organocation (APC) superfamily. Amino acid transporter (AAT) (TC 2.A.3.1) family.

The protein resides in the cell membrane. In terms of biological role, involved in histidine uptake. Has low affinity for arginine and lysine. Plays no significant role in the excretion of accumulated histidine. This Lactococcus lactis subsp. cremoris (strain MG1363) protein is Histidine permease HisP.